Consider the following 184-residue polypeptide: dCTP deaminase (184 aa).

DCTP-binding positions include 107-112, 131-133, Gln152, Tyr166, and Gln176; these read KSTYAR and TLE. Catalysis depends on Glu133, which acts as the Proton donor/acceptor.

This sequence belongs to the dCTP deaminase family. In terms of assembly, homotrimer.

It catalyses the reaction dCTP + H2O + H(+) = dUTP + NH4(+). The protein operates within pyrimidine metabolism; dUMP biosynthesis; dUMP from dCTP (dUTP route): step 1/2. Its function is as follows. Catalyzes the deamination of dCTP to dUTP. The sequence is that of dCTP deaminase from Paramagnetospirillum magneticum (strain ATCC 700264 / AMB-1) (Magnetospirillum magneticum).